We begin with the raw amino-acid sequence, 175 residues long: MYHVVAATTNPAKIKAISLAFDDVYGPGQYRIEGINVDSGVPLQPIGSTETRTGARQRVSNARQMRPEADFWVGVEAGIEDNMTFAWMVIEHLQWRGESRSASLMLPDIILQGIRQGRELGDEMADLTGISNVKHKGGAIGIFTDGKLTRTSVYHQALLLALVPFNNEIYQRPAQ.

A substrate-binding site is contributed by 8-13; sequence TTNPAK. Positions 38 and 68 each coordinate Mg(2+). Residue 68-69 participates in substrate binding; the sequence is EA.

The protein belongs to the YjjX NTPase family. As to quaternary structure, homodimer. Mg(2+) is required as a cofactor. It depends on Mn(2+) as a cofactor.

It catalyses the reaction XTP + H2O = XDP + phosphate + H(+). The catalysed reaction is ITP + H2O = IDP + phosphate + H(+). In terms of biological role, phosphatase that hydrolyzes non-canonical purine nucleotides such as XTP and ITP to their respective diphosphate derivatives. Probably excludes non-canonical purines from DNA/RNA precursor pool, thus preventing their incorporation into DNA/RNA and avoiding chromosomal lesions. This Yersinia enterocolitica serotype O:8 / biotype 1B (strain NCTC 13174 / 8081) protein is Inosine/xanthosine triphosphatase.